A 147-amino-acid chain; its full sequence is Small ribosomal subunit protein eS19 (147 aa).

Belongs to the eukaryotic ribosomal protein eS19 family. As to quaternary structure, component of the small ribosomal subunit.

The protein resides in the cytoplasm. It localises to the nucleus. Component of the small ribosomal subunit. The ribosome is a large ribonucleoprotein complex responsible for the synthesis of proteins in the cell. Required for pre-rRNA processing and maturation of 40S ribosomal subunits. The chain is Small ribosomal subunit protein eS19 (rps19) from Ictalurus punctatus (Channel catfish).